The sequence spans 104 residues: METIAFRMRLHPGKRDEYRRRHDAIWPELADALRAAGISDYWIFLDEDTHHLFAVLKRPIGHRIAQLAETDVMRRWWAYMADLMATGPDGRPVEKSLEPMFHLE.

Position 18 (Tyr-18) interacts with substrate. His-22 acts as the Proton donor in catalysis. Substrate-binding positions include Tyr-41 and 76 to 77 (WW).

Belongs to the rhamnose mutarotase family. Homodimer.

The protein resides in the cytoplasm. The enzyme catalyses alpha-L-rhamnose = beta-L-rhamnose. Its pathway is carbohydrate metabolism; L-rhamnose metabolism. Functionally, involved in the anomeric conversion of L-rhamnose. The chain is L-rhamnose mutarotase from Burkholderia ambifaria (strain ATCC BAA-244 / DSM 16087 / CCUG 44356 / LMG 19182 / AMMD) (Burkholderia cepacia (strain AMMD)).